The primary structure comprises 560 residues: MDIKRTILIAALAVVSYVMVLKWNDDYGQAALPTQNTAASTVAPGLPDGVPAGNNGASADVPSANAESSPAELAPVALSKDLIRVKTDVLELAIDPVGGDIVQLNLPKYPRRQDHPNIPFQLFDNGGERVYLAQSGLTGTDGPDARASGRPLYAAEQKSYQLADGQEQLVVDLKFSDNGVNYIKRFSFKRGEYDLNVSYLIDNQSGQAWSGNMFAQLKRDASGDPSSSTATGTATYLGAALWTASEPYKKVSMKDIDKGSLKENVSGGWVAWLQHYFVTAWIPAKSDNNVVQTRKDSQGNYIIGYTGPVISVPAGGKVETSALLYAGPKIQSKLKELSPGLELTVDYGFLWFIAQPIFWLLQHIHSLLGNWGWSIIVLTMLIKGLFFPLSAASYRSMARMRAVAPKLAALKERFGDDRQKMSQAMMELYKKEKINPLGGCLPILVQMPVFLALYWVLLESVEMRQAPWILWITDLSIKDPFFILPIIMGATMFIQQRLNPTPPDPMQAKVMKMMPIIFTFFFLWFPAGLVLYWVVNNCLSISQQWYITRRIEAATKKAAA.

A helical membrane pass occupies residues 1 to 21; it reads MDIKRTILIAALAVVSYVMVL. The disordered stretch occupies residues 42–66; it reads VAPGLPDGVPAGNNGASADVPSANA. A run of 5 helical transmembrane segments spans residues 341-361, 367-387, 437-457, 468-488, and 515-535; these read LELTVDYGFLWFIAQPIFWLL, LLGNWGWSIIVLTMLIKGLFF, LGGCLPILVQMPVFLALYWVL, WILWITDLSIKDPFFILPIIM, and PIIFTFFFLWFPAGLVLYWVV.

Belongs to the OXA1/ALB3/YidC family. Type 1 subfamily. As to quaternary structure, interacts with the Sec translocase complex via SecD. Specifically interacts with transmembrane segments of nascent integral membrane proteins during membrane integration.

Its subcellular location is the cell inner membrane. Required for the insertion and/or proper folding and/or complex formation of integral membrane proteins into the membrane. Involved in integration of membrane proteins that insert both dependently and independently of the Sec translocase complex, as well as at least some lipoproteins. Aids folding of multispanning membrane proteins. In Pseudomonas putida (strain ATCC 700007 / DSM 6899 / JCM 31910 / BCRC 17059 / LMG 24140 / F1), this protein is Membrane protein insertase YidC.